The sequence spans 252 residues: Ribosomal RNA small subunit methyltransferase J (252 aa).

S-adenosyl-L-methionine contacts are provided by residues 104-105 (RD), 120-121 (ER), 156-157 (SS), and aspartate 174.

Belongs to the methyltransferase superfamily. RsmJ family.

It is found in the cytoplasm. It catalyses the reaction guanosine(1516) in 16S rRNA + S-adenosyl-L-methionine = N(2)-methylguanosine(1516) in 16S rRNA + S-adenosyl-L-homocysteine + H(+). Functionally, specifically methylates the guanosine in position 1516 of 16S rRNA. The protein is Ribosomal RNA small subunit methyltransferase J of Yersinia enterocolitica serotype O:8 / biotype 1B (strain NCTC 13174 / 8081).